The following is a 195-amino-acid chain: Neurensin-1 (195 aa).

Transmembrane regions (helical) follow at residues 66-86 (LISGTVFVILGLTVLAVGFLV) and 120-140 (AVLFCIGGTSMAGCLLMSVFV).

This sequence belongs to the VMP family. As to expression, expressed in brain. Not detectable in other tissues tested.

The protein resides in the membrane. It localises to the cell projection. Its subcellular location is the neuron projection. May play an important role in neural organelle transport, and in transduction of nerve signals or in nerve growth. May play a role in neurite extension. May play a role in memory consolidation. The protein is Neurensin-1 of Homo sapiens (Human).